Here is a 577-residue protein sequence, read N- to C-terminus: Peroxynitrite isomerase THAP4 (577 aa).

Residues 1-85 (MVICCAAVNC…LKPTAVPSIF (85 aa)) form a THAP-type zinc finger. Residues 84-221 (IFHLTEKKRG…DKSGISMDDF (138 aa)) are disordered. A compositionally biased stretch (low complexity) spans 157 to 170 (AAQEAASQEQAQQA). Serine 163 carries the post-translational modification Phosphoserine. The short motif at 235-238 (LHSY) is the HCFC1-binding motif (HBM) element. A Phosphoserine modification is found at serine 239. Residues 240–324 (FSSKHTRERP…AVQSEHSDAS (85 aa)) form a disordered region. Residues 247–266 (ERPSVPREPIDRKRLKKDVE) show a composition bias toward basic and acidic residues. The segment covering 290–300 (TATPQKPSQSP) has biased composition (low complexity). Positions 415–577 (PPKMNPVVEP…LHVTYKKVTP (163 aa)) are nitrobindin. Threonine 444 and histidine 567 together coordinate heme b.

This sequence in the C-terminal section; belongs to the nitrobindin family. Homodimer. Heme b serves as cofactor.

It localises to the cytoplasm. Its subcellular location is the nucleus. The catalysed reaction is peroxynitrite = nitrate. Its pathway is nitrogen metabolism. Functionally, heme-binding protein able to scavenge peroxynitrite and to protect free L-tyrosine against peroxynitrite-mediated nitration, by acting as a peroxynitrite isomerase that converts peroxynitrite to nitrate. Therefore, this protein likely plays a role in peroxynitrite sensing and in the detoxification of reactive nitrogen and oxygen species (RNS and ROS, respectively). Is able to bind nitric oxide (NO) in vitro, but may act as a sensor of peroxynitrite levels in vivo, possibly modulating the transcriptional activity residing in the N-terminal region. In Homo sapiens (Human), this protein is Peroxynitrite isomerase THAP4.